Consider the following 145-residue polypeptide: Allergen MAG29 (145 aa).

Disordered regions lie at residues 1-21 (KDDI…DDKQ) and 103-145 (AGGA…EEVD). A compositionally biased stretch (gly residues) spans 104–137 (GGAGAGGMPGGFPGGFPGTDGSGGGAAGGDGGKS).

Belongs to the heat shock protein 70 family.

The chain is Allergen MAG29 (MAG29) from Dermatophagoides farinae (American house dust mite).